Here is a 113-residue protein sequence, read N- to C-terminus: MGGLEPCSRLLLLPLLLAVGGLRPVQAQAQSDCSCSTVSPGVLAGIVLGDLVLTVLIALAVYFLGRLVPRGRGAAEAATRKQRITETESPYQELQGQRSDVYSDLNTQRPYYK.

Positions 1 to 27 (MGGLEPCSRLLLLPLLLAVGGLRPVQA) are cleaved as a signal peptide. Residues 28-40 (QAQSDCSCSTVSP) are Extracellular-facing. Residues 41–61 (GVLAGIVLGDLVLTVLIALAV) traverse the membrane as a helical segment. Residue Asp-50 coordinates Ca(2+). At 62-113 (YFLGRLVPRGRGAAEAATRKQRITETESPYQELQGQRSDVYSDLNTQRPYYK) the chain is on the cytoplasmic side. A disordered region spans residues 75–113 (AEAATRKQRITETESPYQELQGQRSDVYSDLNTQRPYYK). The ITAM domain maps to 80-108 (RKQRITETESPYQELQGQRSDVYSDLNTQ). A compositionally biased stretch (polar residues) spans 87–113 (TESPYQELQGQRSDVYSDLNTQRPYYK). Phosphotyrosine occurs at positions 91 and 102.

It belongs to the TYROBP family. As to quaternary structure, homodimer; disulfide-linked. Homotrimer; disulfide-linked. Homotetramer; disulfide-linked. Homotrimers and homotetramers form when low levels of partner receptors are available and is competitive with assembly with interacting receptors. They may represent alternative oligomerization states or may be intermediates in the receptor assembly process. Binding of a metal cation aids in homooligomerization through coordination of the metal ion by the subunits of the oligomer. Interacts with TREM1. Interacts with TREM2. Interacts with CLECSF5. Interacts with CD300LB and CD300C2. Interacts with CD300E. Interacts (via ITAM domain) with SYK (via SH2 domains); activates SYK mediating neutrophils and macrophages integrin-mediated activation. Interacts with KLRC2. Interacts with CD300H. Interacts with KLRD1. In terms of processing, following ligand binding by associated receptors, tyrosine phosphorylated in the ITAM domain which leads to activation of additional tyrosine kinases and subsequent cell activation.

It is found in the cell membrane. Its function is as follows. Adapter protein which non-covalently associates with activating receptors found on the surface of a variety of immune cells to mediate signaling and cell activation following ligand binding by the receptors. TYROBP is tyrosine-phosphorylated in the ITAM domain following ligand binding by the associated receptors which leads to activation of additional tyrosine kinases and subsequent cell activation. Also has an inhibitory role in some cells. Non-covalently associates with activating receptors of the CD300 family to mediate cell activation. Also mediates cell activation through association with activating receptors of the CD200R family. Required for neutrophil activation mediated by integrin. Required for the activation of myeloid cells mediated by the CLEC5A/MDL1 receptor. Associates with natural killer (NK) cell receptors such as the KLRD1/KLRC2 heterodimer to mediate NK cell activation. Associates with TREM1 to mediate activation of neutrophils and monocytes. Associates with TREM2 on monocyte-derived dendritic cells to mediate up-regulation of chemokine receptor CCR7 and dendritic cell maturation and survival. Association with TREM2 mediates cytokine-induced formation of multinucleated giant cells which are formed by the fusion of macrophages. Stabilizes the TREM2 C-terminal fragment (TREM2-CTF) produced by TREM2 ectodomain shedding which suppresses the release of pro-inflammatory cytokines. In microglia, required with TREM2 for phagocytosis of apoptotic neurons. Required with ITGAM/CD11B in microglia to control production of microglial superoxide ions which promote the neuronal apoptosis that occurs during brain development. Promotes pro-inflammatory responses in microglia following nerve injury which accelerates degeneration of injured neurons. Positively regulates the expression of the IRAK3/IRAK-M kinase and IL10 production by liver dendritic cells and inhibits their T cell allosimulatory ability. Negatively regulates B cell proliferation. Required for CSF1-mediated osteoclast cytoskeletal organization. Positively regulates multinucleation during osteoclast development. The protein is TYRO protein tyrosine kinase-binding protein of Macaca mulatta (Rhesus macaque).